Here is a 382-residue protein sequence, read N- to C-terminus: S-adenosylmethionine synthase (382 aa).

ATP is bound at residue His16. Asp18 is a Mg(2+) binding site. Glu44 is a binding site for K(+). Positions 57 and 100 each coordinate L-methionine. The segment at 100–110 (QSADIAMGVDE) is flexible loop. ATP is bound by residues 165–167 (DAK), Asp240, 246–247 (RK), Ala263, and Lys267. Asp240 is an L-methionine binding site. Lys271 serves as a coordination point for L-methionine.

Belongs to the AdoMet synthase family. As to quaternary structure, homotetramer; dimer of dimers. Mg(2+) is required as a cofactor. K(+) serves as cofactor.

Its subcellular location is the cytoplasm. It catalyses the reaction L-methionine + ATP + H2O = S-adenosyl-L-methionine + phosphate + diphosphate. It functions in the pathway amino-acid biosynthesis; S-adenosyl-L-methionine biosynthesis; S-adenosyl-L-methionine from L-methionine: step 1/1. In terms of biological role, catalyzes the formation of S-adenosylmethionine (AdoMet) from methionine and ATP. The overall synthetic reaction is composed of two sequential steps, AdoMet formation and the subsequent tripolyphosphate hydrolysis which occurs prior to release of AdoMet from the enzyme. The sequence is that of S-adenosylmethionine synthase from Saccharophagus degradans (strain 2-40 / ATCC 43961 / DSM 17024).